Here is a 578-residue protein sequence, read N- to C-terminus: Proline--tRNA ligase (578 aa).

This sequence belongs to the class-II aminoacyl-tRNA synthetase family. ProS type 1 subfamily. Homodimer.

The protein localises to the cytoplasm. It carries out the reaction tRNA(Pro) + L-proline + ATP = L-prolyl-tRNA(Pro) + AMP + diphosphate. Catalyzes the attachment of proline to tRNA(Pro) in a two-step reaction: proline is first activated by ATP to form Pro-AMP and then transferred to the acceptor end of tRNA(Pro). As ProRS can inadvertently accommodate and process non-cognate amino acids such as alanine and cysteine, to avoid such errors it has two additional distinct editing activities against alanine. One activity is designated as 'pretransfer' editing and involves the tRNA(Pro)-independent hydrolysis of activated Ala-AMP. The other activity is designated 'posttransfer' editing and involves deacylation of mischarged Ala-tRNA(Pro). The misacylated Cys-tRNA(Pro) is not edited by ProRS. This chain is Proline--tRNA ligase, found in Syntrophus aciditrophicus (strain SB).